The following is a 220-amino-acid chain: Large ribosomal subunit protein uL3 (220 aa).

A disordered region spans residues 126–158 (GFQGAIKRHGQSRGPMSHGSRYHRRPGSMGMAS).

It belongs to the universal ribosomal protein uL3 family. As to quaternary structure, part of the 50S ribosomal subunit. Forms a cluster with proteins L14 and L19.

Functionally, one of the primary rRNA binding proteins, it binds directly near the 3'-end of the 23S rRNA, where it nucleates assembly of the 50S subunit. The chain is Large ribosomal subunit protein uL3 from Macrococcus caseolyticus (strain JCSC5402) (Macrococcoides caseolyticum).